A 473-amino-acid chain; its full sequence is SHC-transforming protein 1 (473 aa).

A disordered region spans residues M1–R26. S29 is subject to Phosphoserine. K44 carries the N6-acetyllysine modification. The 184-residue stretch at M46–E229 folds into the PID domain. The tract at residues H216–D314 is disordered. The CH1 stretch occupies residues E230–P377. Residues Y239, Y240, and Y317 each carry the phosphotyrosine modification. The interval Q328–L348 is disordered. Residue S343 is modified to Phosphoserine. The 92-residue stretch at W378 to V469 folds into the SH2 domain.

Interacts with CPNE3; this interaction may mediate the binding of CPNE3 with ERBB2. Interacts with the Trk receptors NTRK1, NTRK2 and NTRK3; in a phosphotyrosine-dependent manner. Interacts with the NPXY motif of tyrosine-phosphorylated IGF1R and INSR in vitro via the PID domain. Once activated, binds to GRB2. Interacts with tyrosine-phosphorylated CD3T and DDR2. Interacts with the N-terminal region of APS. Interacts with phosphorylated LRP1 and IRS4. Interacts with INPP5D/SHIP1 and INPPL1/SHIP2. Interacts with ALK, GAB2, GRB7 and KIT. Interacts with PTPN6/SHP (tyrosine phosphorylated). Identified in a complex containing FGFR4, NCAM1, CDH2, PLCG1, FRS2, SRC, SHC1, GAP43 and CTTN. Interacts with FLT4 (tyrosine-phosphorylated). Interacts with EPHB1 and GRB2; activates the MAPK/ERK cascade to regulate cell migration. Interacts with PDGFRB (tyrosine-phosphorylated). Interacts with ERBB4. Interacts with TEK/TIE2 (tyrosine-phosphorylated). Interacts with PTK2/FAK1. Interacts with CEACAM1; this interaction is CEACAM1-phosphorylation-dependent and mediates interaction with EGFR or INSR resulting in decrease coupling of SHC1 to the MAPK3/ERK1-MAPK1/ERK2 pathway. Interacts (via PID domain) with PEAK1 (when phosphorylated). Found in a complex with PPP1CA, PPP1CC, SHC1 and PEAK1. Post-translationally, phosphorylated by activated epidermal growth factor receptor. Phosphorylated in response to KIT signaling. Tyrosine phosphorylated in response to FLT3 and FLT4 signaling and by ligand-activated ALK. Tyrosine phosphorylated by ligand-activated PDGFRB. Tyrosine phosphorylated by TEK/TIE2. May be tyrosine phosphorylated by activated PTK2/FAK1. Tyrosine phosphorylated by activated PTK2B/PYK2. Dephosphorylation by PTPN2 may regulate interaction with GRB2.

The protein localises to the cytoplasm. It localises to the cell junction. It is found in the focal adhesion. Functionally, signaling adapter that couples activated growth factor receptors to signaling pathways. Participates in a signaling cascade initiated by activated KIT and KITLG/SCF. Participates in signaling downstream of the angiopoietin receptor TEK/TIE2, and plays a role in the regulation of endothelial cell migration and sprouting angiogenesis. In Bos taurus (Bovine), this protein is SHC-transforming protein 1 (SHC1).